Here is a 156-residue protein sequence, read N- to C-terminus: Deoxyuridine 5'-triphosphate nucleotidohydrolase (156 aa).

Residues 74–76, Asn-87, 91–93, and Lys-101 each bind substrate; these read RSG and TID.

This sequence belongs to the dUTPase family. Mg(2+) is required as a cofactor.

It catalyses the reaction dUTP + H2O = dUMP + diphosphate + H(+). It participates in pyrimidine metabolism; dUMP biosynthesis; dUMP from dCTP (dUTP route): step 2/2. This enzyme is involved in nucleotide metabolism: it produces dUMP, the immediate precursor of thymidine nucleotides and it decreases the intracellular concentration of dUTP so that uracil cannot be incorporated into DNA. The polypeptide is Deoxyuridine 5'-triphosphate nucleotidohydrolase (Wolbachia sp. subsp. Brugia malayi (strain TRS)).